The chain runs to 512 residues: Probable amidase At4g34880 (512 aa).

Catalysis depends on charge relay system residues Lys-117 and Ser-198. The active-site Acyl-ester intermediate is the Ser-222.

This sequence belongs to the amidase family. Expressed in vasculature of roots, cotyledons, leaves and sepals.

It carries out the reaction a monocarboxylic acid amide + H2O = a monocarboxylate + NH4(+). The chain is Probable amidase At4g34880 from Arabidopsis thaliana (Mouse-ear cress).